The following is a 227-amino-acid chain: Ribosomal RNA small subunit methyltransferase G (227 aa).

S-adenosyl-L-methionine-binding positions include G74, L79, 124-125, and R142; that span reads AE.

The protein belongs to the methyltransferase superfamily. RNA methyltransferase RsmG family.

It is found in the cytoplasm. Its function is as follows. Specifically methylates the N7 position of guanine in position 518 of 16S rRNA. This is Ribosomal RNA small subunit methyltransferase G from Mycolicibacterium gilvum (strain PYR-GCK) (Mycobacterium gilvum (strain PYR-GCK)).